The sequence spans 444 residues: Protein translocase subunit SecY (444 aa).

10 helical membrane-spanning segments follow: residues F24–I44, I77–V97, G123–V143, M153–G173, I181–I201, V215–M235, M269–A289, Y318–F338, L376–W396, and F400–Q420.

This sequence belongs to the SecY/SEC61-alpha family. Component of the Sec protein translocase complex. Heterotrimer consisting of SecY, SecE and SecG subunits. The heterotrimers can form oligomers, although 1 heterotrimer is thought to be able to translocate proteins. Interacts with the ribosome. Interacts with SecDF, and other proteins may be involved. Interacts with SecA.

The protein resides in the cell inner membrane. Functionally, the central subunit of the protein translocation channel SecYEG. Consists of two halves formed by TMs 1-5 and 6-10. These two domains form a lateral gate at the front which open onto the bilayer between TMs 2 and 7, and are clamped together by SecE at the back. The channel is closed by both a pore ring composed of hydrophobic SecY resides and a short helix (helix 2A) on the extracellular side of the membrane which forms a plug. The plug probably moves laterally to allow the channel to open. The ring and the pore may move independently. This is Protein translocase subunit SecY from Vibrio cholerae serotype O1 (strain ATCC 39315 / El Tor Inaba N16961).